We begin with the raw amino-acid sequence, 292 residues long: Early E4 34 kDa protein (292 aa).

This sequence belongs to the adenoviridae E4 30 to 34 kDa protein family. Interacts with E1B-55k.

The protein localises to the host nucleus. It localises to the host cytoplasm. Its function is as follows. Plays a major role to prevent cellular inhibition of viral genome replication by nuclear bodies. Assembles an SCF-like E3 ubiquitin ligase complex based on the cellular proteins ELOB, ELOC, CUL5 and RBX1, in cooperation with viral E1B-55K. This viral RING-type ligase ubiquitinates cellular substrates prior to proteasomal degradation: p53/TP53, LIG4, MRE11-RAD50-NBS1 (MRN) complex, ITGA3, DAXX and BLM. The chain is Early E4 34 kDa protein from Human adenovirus D serotype 9 (HAdV-9).